Consider the following 293-residue polypeptide: GTPase Era (293 aa).

Positions 3-170 (KSGFITIIGR…VELMVKYMPE (168 aa)) constitute an Era-type G domain. The interval 11 to 18 (GRPNVGKS) is G1. 11 to 18 (GRPNVGKS) is a binding site for GTP. The interval 37–41 (QTTRN) is G2. The segment at 58–61 (DTPG) is G3. GTP-binding positions include 58-62 (DTPGI) and 120-123 (NKID). Residues 120 to 123 (NKID) form a G4 region. Residues 149–151 (ISA) are G5. In terms of domain architecture, KH type-2 spans 201-278 (LSKEVPHGIA…YLEVWVKVKK (78 aa)).

It belongs to the TRAFAC class TrmE-Era-EngA-EngB-Septin-like GTPase superfamily. Era GTPase family. Monomer.

Its subcellular location is the cytoplasm. The protein resides in the cell membrane. Its function is as follows. An essential GTPase that binds both GDP and GTP, with rapid nucleotide exchange. Plays a role in 16S rRNA processing and 30S ribosomal subunit biogenesis and possibly also in cell cycle regulation and energy metabolism. The sequence is that of GTPase Era from Clostridium kluyveri (strain NBRC 12016).